The sequence spans 90 residues: RING finger protein Z (90 aa).

Residue glycine 2 is the site of N-myristoyl glycine; by host attachment. The segment at 32-68 (CKSCWQKFDSLVRCHDHYLCRHCLNLLLSVSDRCPLC) adopts an RING-type; atypical zinc-finger fold. The PPXY motif motif lies at 85-88 (PPPY).

It belongs to the arenaviridae Z protein family. Interacts with protein NP; this interaction probably directs the encapsidated genome to budding sites. Interacts (via RING-type zinc finger) with polymerase L; this interaction inhibits viral transcription and replication, Z partially blocks the product exit tunnel for the releasing nascent RNA product. Interacts with the glycoprotein complex; this interaction plays a role in virion budding. Interacts (via RING-type zinc finger) with host EIF4E; this interaction results in conformational changes of both interacting proteins and reduces EIF4E affinity for its substrate, the 5'-m7 G cap structure. Interacts (via late-budding domain) with host TSG101; this interaction is essential for budding and release of viral particles. Interacts with host RPLP0; this interaction may serve to load ribosome-like particles inside the virion. Interacts with host PML; this interaction induces PML bodies redistribution in the cytoplasm upon viral infection. Post-translationally, myristoylation is required for the role of RING finger protein Z in assembly and budding.

It is found in the virion. The protein localises to the host cytoplasm. The protein resides in the host perinuclear region. Its subcellular location is the host cell membrane. Functionally, plays a crucial role in virion assembly and budding. Expressed late in the virus life cycle, it acts as an inhibitor of viral transcription and RNA synthesis by interacting with the viral polymerase L. Presumably recruits the NP encapsidated genome to cellular membranes at budding sites via direct interaction with NP. Plays critical roles in the final steps of viral release by interacting with host TSG101, a member of the vacuolar protein-sorting pathway and using other cellular host proteins involved in vesicle formation pathway. The budding of the virus progeny occurs after association of protein Z with the viral glycoprotein complex SSP-GP1-GP2 at the cell periphery, step that requires myristoylation of protein Z. Also selectively represses protein production by associating with host EIF4E. In cell-based minigenome assay, has an inhibitory effect on the ribonucleoprotein machinery (vRNP), which is responsible for the replication and transcription of the viral genome. This chain is RING finger protein Z, found in Homo sapiens (Human).